Reading from the N-terminus, the 258-residue chain is Large ribosomal subunit protein uL2x (258 aa).

Positions 211–231 are disordered; the sequence is HGGGNHQHIGHASTVRRDAPP.

The protein belongs to the universal ribosomal protein uL2 family.

The sequence is that of Large ribosomal subunit protein uL2x (RPL8C) from Arabidopsis thaliana (Mouse-ear cress).